Here is a 70-residue protein sequence, read N- to C-terminus: Large ribosomal subunit protein bL31 (70 aa).

4 residues coordinate Zn(2+): Cys16, Cys18, Cys36, and Cys39.

The protein belongs to the bacterial ribosomal protein bL31 family. Type A subfamily. Part of the 50S ribosomal subunit. Zn(2+) is required as a cofactor.

Its function is as follows. Binds the 23S rRNA. The protein is Large ribosomal subunit protein bL31 of Tolumonas auensis (strain DSM 9187 / NBRC 110442 / TA 4).